A 202-amino-acid chain; its full sequence is High mobility group protein B3 (202 aa).

2 consecutive DNA-binding regions (HMG box) follow at residues 9–79 (PKGK…KDYG) and 93–161 (PKRP…ADYK). A cysteine sulfonic acid (-SO3H); alternate mark is found at cysteine 23 and cysteine 45. The cysteines at positions 23 and 45 are disulfide-linked. Residues 71 to 98 (YDREMKDYGPAKGGKKKKDPNAPKRPPS) are disordered. Cysteine sulfonic acid (-SO3H) is present on cysteine 104. Residues 161–202 (KSKGKFDGAKGAATKAARKKVEEEDEEEEEDEEEEDEDDDDE) form a disordered region. The segment covering 183–202 (EEDEEEEEDEEEEDEDDDDE) has biased composition (acidic residues).

It belongs to the HMGB family. Reduction/oxidation of cysteine residues Cys-23, Cys-45 and Cys-104 and a possible intramolecular disulfide bond involving Cys-23 and Cys-45 give rise to different redox forms with specific functional activities in various cellular compartments: 1- fully reduced HMGB3 (HMGB3C23hC45hC104h), 2- disulfide HMGB3 (HMGB3C23-C45C104h) and 3- sulfonyl HMGB3 (HMGB3C23soC45soC104so).

It localises to the nucleus. Its subcellular location is the chromosome. It is found in the cytoplasm. Its function is as follows. Multifunctional protein with various roles in different cellular compartments. May act in a redox sensitive manner. Associates with chromatin and binds DNA with a preference for non-canonical DNA structures such as single-stranded DNA. Can bend DNA and enhance DNA flexibility by looping thus providing a mechanism to promote activities on various gene promoters. Binds to the delta-1 crystallin/ASL1 enhancer. Proposed to be involved in the innate immune response to nucleic acids by acting as a cytoplasmic promiscuous immunogenic DNA/RNA sensor. This Gallus gallus (Chicken) protein is High mobility group protein B3 (HMGB3).